We begin with the raw amino-acid sequence, 142 residues long: Hemoglobin subunit alpha-1 (142 aa).

A Globin domain is found at 2 to 142 (LLSADDKKHI…VSTVLTSKYR (141 aa)). O2 is bound at residue His-59. A heme b-binding site is contributed by His-88.

Belongs to the globin family. In terms of assembly, heterotetramer of two alpha chains and two beta chains. In terms of tissue distribution, red blood cells.

In terms of biological role, involved in oxygen transport from the lung to the various peripheral tissues. The sequence is that of Hemoglobin subunit alpha-1 (hba1) from Xenopus laevis (African clawed frog).